Here is a 165-residue protein sequence, read N- to C-terminus: Small ribosomal subunit protein uS5 (165 aa).

The 64-residue stretch at 13-76 (LEEKVLVVNR…EAARKNLITI (64 aa)) folds into the S5 DRBM domain.

It belongs to the universal ribosomal protein uS5 family. Part of the 30S ribosomal subunit. Contacts proteins S4 and S8.

With S4 and S12 plays an important role in translational accuracy. In terms of biological role, located at the back of the 30S subunit body where it stabilizes the conformation of the head with respect to the body. This chain is Small ribosomal subunit protein uS5, found in Chlamydia felis (strain Fe/C-56) (Chlamydophila felis).